The following is a 379-amino-acid chain: Armadillo repeat-containing X-linked protein 3 (379 aa).

At 1–6 the chain is on the mitochondrial intermembrane side; sequence MGYARK. Mitochondrion outer membrane (MOM)-targeting sequence stretches follow at residues 1–6 and 26–37; these read MGYARK and RLTRGRKQNKEK. The helical; Signal-anchor transmembrane segment at 7 to 29 threads the bilayer; sequence VGWVTAGLVIGAGACYCIYRLTR. The Cytoplasmic portion of the chain corresponds to 30-379; that stretch reads GRKQNKEKMA…TERMFPKSQE (350 aa). 3 positions are modified to phosphoserine: serine 61, serine 67, and serine 72. The nuclear localization signal stretch occupies residues 89 to 98; sequence RARARARARA. Positions 95–106 are enriched in basic residues; that stretch reads RARATRARRAVQ. Residues 95–116 form a disordered region; the sequence is RARATRARRAVQKRASPNSDDT. A Phosphoserine modification is found at serine 110. 3 ARM repeats span residues 111 to 151, 153 to 192, and 233 to 272; these read PNSD…NNAA, AFNR…NLSV, and VTNE…NLAE.

The protein belongs to the eutherian X-chromosome-specific Armcx family. As to quaternary structure, interacts (via ARM domain) with MIRO1, MIRO2 and TRAK2. The interaction with Miro is calcium-dependent. Interacts with Sox10. In terms of tissue distribution, highly expressed in the developing neural tissues, neural crest derivatives and hind limbs. Also widely expressed in the adult nervous tissue, especially in the forebrain, including the cerebral cortex, hippocampus and thalamus.

It localises to the mitochondrion outer membrane. It is found in the cytoplasm. Its subcellular location is the nucleus. Regulates mitochondrial aggregation and transport in axons in living neurons. May link mitochondria to the Trak2-kinesin motor complex via its interaction with Miro and Trak2. Mitochondrial distribution and dynamics is regulated through Armcx3 protein degradation, which is promoted by PCK and negatively regulated by Wnt1. Enhances the Sox10-mediated transactivation of the neuronal acetylcholine receptor subunit alpha-3 and beta-4 subunit gene promoters. The protein is Armadillo repeat-containing X-linked protein 3 (Armcx3) of Mus musculus (Mouse).